The sequence spans 669 residues: tRNA 5-methylaminomethyl-2-thiouridine biosynthesis bifunctional protein MnmC (669 aa).

The interval 1 to 246 (MIKNANIHFN…KRSMLIGTLK (246 aa)) is tRNA (mnm(5)s(2)U34)-methyltransferase. The interval 271 to 669 (IGGGIASSCI…IVRDLIRNKI (399 aa)) is FAD-dependent cmnm(5)s(2)U34 oxidoreductase.

It in the N-terminal section; belongs to the methyltransferase superfamily. tRNA (mnm(5)s(2)U34)-methyltransferase family. The protein in the C-terminal section; belongs to the DAO family. It depends on FAD as a cofactor.

The protein localises to the cytoplasm. It carries out the reaction 5-aminomethyl-2-thiouridine(34) in tRNA + S-adenosyl-L-methionine = 5-methylaminomethyl-2-thiouridine(34) in tRNA + S-adenosyl-L-homocysteine + H(+). Catalyzes the last two steps in the biosynthesis of 5-methylaminomethyl-2-thiouridine (mnm(5)s(2)U) at the wobble position (U34) in tRNA. Catalyzes the FAD-dependent demodification of cmnm(5)s(2)U34 to nm(5)s(2)U34, followed by the transfer of a methyl group from S-adenosyl-L-methionine to nm(5)s(2)U34, to form mnm(5)s(2)U34. This is tRNA 5-methylaminomethyl-2-thiouridine biosynthesis bifunctional protein MnmC from Pseudoalteromonas translucida (strain TAC 125).